The chain runs to 337 residues: tRNA dimethylallyltransferase (337 aa).

24–31 (GPTGAGKT) is a binding site for ATP. 26–31 (TGAGKT) lines the substrate pocket. Interaction with substrate tRNA stretches follow at residues 49–52 (DSRQ) and 188–192 (QRAVR).

This sequence belongs to the IPP transferase family. As to quaternary structure, monomer. Mg(2+) is required as a cofactor.

The catalysed reaction is adenosine(37) in tRNA + dimethylallyl diphosphate = N(6)-dimethylallyladenosine(37) in tRNA + diphosphate. In terms of biological role, catalyzes the transfer of a dimethylallyl group onto the adenine at position 37 in tRNAs that read codons beginning with uridine, leading to the formation of N6-(dimethylallyl)adenosine (i(6)A). This chain is tRNA dimethylallyltransferase, found in Nitratidesulfovibrio vulgaris (strain DSM 19637 / Miyazaki F) (Desulfovibrio vulgaris).